Here is a 274-residue protein sequence, read N- to C-terminus: Undecaprenyl-diphosphatase (274 aa).

Helical transmembrane passes span leucine 4–isoleucine 24, valine 46–valine 66, isoleucine 86–isoleucine 106, valine 109–tryptophan 129, isoleucine 145–threonine 165, phenylalanine 188–alanine 208, isoleucine 214–valine 234, and phenylalanine 250–isoleucine 270.

It belongs to the UppP family.

The protein localises to the cell inner membrane. The catalysed reaction is di-trans,octa-cis-undecaprenyl diphosphate + H2O = di-trans,octa-cis-undecaprenyl phosphate + phosphate + H(+). In terms of biological role, catalyzes the dephosphorylation of undecaprenyl diphosphate (UPP). Confers resistance to bacitracin. The protein is Undecaprenyl-diphosphatase of Cellvibrio japonicus (strain Ueda107) (Pseudomonas fluorescens subsp. cellulosa).